We begin with the raw amino-acid sequence, 439 residues long: tRNA-2-methylthio-N(6)-dimethylallyladenosine synthase (439 aa).

An MTTase N-terminal domain is found at 2–119 (KKLYLKTHGC…LPDLLDSVIQ (118 aa)). 6 residues coordinate [4Fe-4S] cluster: Cys11, Cys48, Cys82, Cys156, Cys160, and Cys163. Positions 142–374 (RAEGPSAFVS…QNRINAKAAE (233 aa)) constitute a Radical SAM core domain. One can recognise a TRAM domain in the interval 377–439 (QSMVGTQQRI…RPYSLWGEIC (63 aa)).

This sequence belongs to the methylthiotransferase family. MiaB subfamily. Monomer. [4Fe-4S] cluster is required as a cofactor.

It localises to the cytoplasm. It carries out the reaction N(6)-dimethylallyladenosine(37) in tRNA + (sulfur carrier)-SH + AH2 + 2 S-adenosyl-L-methionine = 2-methylsulfanyl-N(6)-dimethylallyladenosine(37) in tRNA + (sulfur carrier)-H + 5'-deoxyadenosine + L-methionine + A + S-adenosyl-L-homocysteine + 2 H(+). In terms of biological role, catalyzes the methylthiolation of N6-(dimethylallyl)adenosine (i(6)A), leading to the formation of 2-methylthio-N6-(dimethylallyl)adenosine (ms(2)i(6)A) at position 37 in tRNAs that read codons beginning with uridine. In Coxiella burnetii (strain CbuK_Q154) (Coxiella burnetii (strain Q154)), this protein is tRNA-2-methylthio-N(6)-dimethylallyladenosine synthase.